Here is a 540-residue protein sequence, read N- to C-terminus: Chaperonin GroEL (540 aa).

ATP contacts are provided by residues 30-33 (TLGP), K51, 87-91 (DGTTT), G415, 479-481 (NAA), and D495.

The protein belongs to the chaperonin (HSP60) family. As to quaternary structure, forms a cylinder of 14 subunits composed of two heptameric rings stacked back-to-back. Interacts with the co-chaperonin GroES.

The protein resides in the cytoplasm. The enzyme catalyses ATP + H2O + a folded polypeptide = ADP + phosphate + an unfolded polypeptide.. Functionally, together with its co-chaperonin GroES, plays an essential role in assisting protein folding. The GroEL-GroES system forms a nano-cage that allows encapsulation of the non-native substrate proteins and provides a physical environment optimized to promote and accelerate protein folding. This Raoultella planticola (Klebsiella planticola) protein is Chaperonin GroEL.